Consider the following 802-residue polypeptide: Oligophrenin-1 (802 aa).

Positions 265–368 (QPTIEGYLYT…WMEAMDGKEP (104 aa)) constitute a PH domain. The region spanning 380 to 564 (MELNEVGFKF…ILIEHFGKIY (185 aa)) is the Rho-GAP domain. Disordered regions lie at residues 606-665 (SLDE…SEPC) and 681-802 (GTKA…GDES). Residues 617 to 627 (QTPNGTITSNL) are compositionally biased toward polar residues. Positions 716 to 732 (HHKEGDTDGFSKVRPPG) are enriched in basic and acidic residues.

As to quaternary structure, interacts with HOMER1. Interacts with AMPA receptor complexes. Interacts with SH3GL2 (endophilin-A1). Interacts (via C-terminus) with NR1D1.

It localises to the postsynapse. It is found in the presynapse. The protein localises to the cell projection. The protein resides in the axon. Its subcellular location is the dendritic spine. It localises to the dendrite. It is found in the cytoplasm. Its function is as follows. Stimulates GTP hydrolysis of members of the Rho family. Its action on RHOA activity and signaling is implicated in growth and stabilization of dendritic spines, and therefore in synaptic function. Critical for the stabilization of AMPA receptors at postsynaptic sites. Critical for the regulation of synaptic vesicle endocytosis at presynaptic terminals. Required for the localization of NR1D1 to dendrites, can suppress its repressor activity and protect it from proteasomal degradation. This is Oligophrenin-1 (Ophn1) from Mus musculus (Mouse).